The chain runs to 183 residues: dTTP/UTP pyrophosphatase (183 aa).

Catalysis depends on aspartate 64, which acts as the Proton acceptor.

This sequence belongs to the Maf family. YhdE subfamily. It depends on a divalent metal cation as a cofactor.

The protein resides in the cytoplasm. The catalysed reaction is dTTP + H2O = dTMP + diphosphate + H(+). The enzyme catalyses UTP + H2O = UMP + diphosphate + H(+). Functionally, nucleoside triphosphate pyrophosphatase that hydrolyzes dTTP and UTP. May have a dual role in cell division arrest and in preventing the incorporation of modified nucleotides into cellular nucleic acids. The sequence is that of dTTP/UTP pyrophosphatase from Acinetobacter baylyi (strain ATCC 33305 / BD413 / ADP1).